The primary structure comprises 562 residues: MDYKTQFAESLSNIFTNELTQKQILDLIETPKQDEFGDAAFPCFSLAKQYKKSPAIIAKEVAEKLSDPFFTKVEAVGPYVNVFFNRDTVSDAVLKTILAEKEEYGQNHFGCEKTVVIDYSSPNIAKPFSMGHLRSTMIGNSLKHIAEKCGYEVVGINYIGDWGTQFGKLITAYKKWGNEAVVKEDPIRELFKLYVQFHEEIKDDEELEEEGRAWFKKLEEGDEEAVELWNWFRHESLKEFSRIYELLGVEFTNFQGEAFYNNLMEDFIGILEEHDLLEESEGALVVNLEEEGMPPCLIRKSDGATIYATRDLTAALYRQNTFGFDKALYVVGPEQSLHFNQFFTVLKKLGYTWVDGMEHVPFGFILKDGKKMSTRKGRVILLEEVLEEAIELAKQNIEEKNPNLKQKEEVAKQVGAGAVIFHDLKNERMHNIEFSLENMLKFEGETGPYVQYTHARACSILRKESVEFETCTFTLKDDYSWNIVKLLNKFPEVIEAACNKNEPSVISKYVLDVAQSFNKYYGNVRILDENAEKDSRLALVYAVTVVLKEGLRLLGVEAPEEM.

The 'HIGH' region motif lies at 122–132 (PNIAKPFSMGH).

It belongs to the class-I aminoacyl-tRNA synthetase family. Monomer.

It is found in the cytoplasm. It catalyses the reaction tRNA(Arg) + L-arginine + ATP = L-arginyl-tRNA(Arg) + AMP + diphosphate. The protein is Arginine--tRNA ligase 1 of Bacillus cereus (strain ZK / E33L).